We begin with the raw amino-acid sequence, 561 residues long: Potassium-transporting ATPase potassium-binding subunit (561 aa).

The next 12 helical transmembrane spans lie at 2 to 22 (GLGL…TPVL), 65 to 85 (YIRA…SLIH), 135 to 155 (ALGF…IAFI), 177 to 197 (ILLP…VPQT), 253 to 273 (FIET…YGVF), 280 to 300 (AWLL…VAAT), 327 to 347 (FGWA…CGAV), 353 to 373 (ALMP…IIWG), 378 to 398 (GTAY…LMVG), 413 to 433 (IVLA…PSAI), 482 to 502 (LSTS…MLLL), and 531 to 551 (AGIV…LGPI).

This sequence belongs to the KdpA family. In terms of assembly, the system is composed of three essential subunits: KdpA, KdpB and KdpC.

It localises to the cell membrane. Its function is as follows. Part of the high-affinity ATP-driven potassium transport (or Kdp) system, which catalyzes the hydrolysis of ATP coupled with the electrogenic transport of potassium into the cytoplasm. This subunit binds the extracellular potassium ions and delivers the ions to the membrane domain of KdpB through an intramembrane tunnel. The chain is Potassium-transporting ATPase potassium-binding subunit from Anabaena sp. (strain L31).